A 220-amino-acid polypeptide reads, in one-letter code: Phosphatidylserine decarboxylase proenzyme (220 aa).

The active-site Schiff-base intermediate with substrate; via pyruvic acid is the Ser188. Ser188 carries the pyruvic acid (Ser); by autocatalysis modification.

The protein belongs to the phosphatidylserine decarboxylase family. PSD-A subfamily. In terms of assembly, heterodimer of a large membrane-associated beta subunit and a small pyruvoyl-containing alpha subunit. Pyruvate is required as a cofactor. Is synthesized initially as an inactive proenzyme. Formation of the active enzyme involves a self-maturation process in which the active site pyruvoyl group is generated from an internal serine residue via an autocatalytic post-translational modification. Two non-identical subunits are generated from the proenzyme in this reaction, and the pyruvate is formed at the N-terminus of the alpha chain, which is derived from the carboxyl end of the proenzyme. The post-translation cleavage follows an unusual pathway, termed non-hydrolytic serinolysis, in which the side chain hydroxyl group of the serine supplies its oxygen atom to form the C-terminus of the beta chain, while the remainder of the serine residue undergoes an oxidative deamination to produce ammonia and the pyruvoyl prosthetic group on the alpha chain.

It is found in the cell membrane. The enzyme catalyses a 1,2-diacyl-sn-glycero-3-phospho-L-serine + H(+) = a 1,2-diacyl-sn-glycero-3-phosphoethanolamine + CO2. Its pathway is phospholipid metabolism; phosphatidylethanolamine biosynthesis; phosphatidylethanolamine from CDP-diacylglycerol: step 2/2. In terms of biological role, catalyzes the formation of phosphatidylethanolamine (PtdEtn) from phosphatidylserine (PtdSer). This is Phosphatidylserine decarboxylase proenzyme from Parabacteroides distasonis (strain ATCC 8503 / DSM 20701 / CIP 104284 / JCM 5825 / NCTC 11152).